The sequence spans 455 residues: Mu-like prophage FluMu DNA circularization protein (455 aa).

A DNA-binding region (H-T-H motif) is located at residues 368–387 (VILDNADAEQWTSYAALEQY).

This sequence to phage Mu protein N.

This chain is Mu-like prophage FluMu DNA circularization protein, found in Haemophilus influenzae (strain ATCC 51907 / DSM 11121 / KW20 / Rd).